We begin with the raw amino-acid sequence, 432 residues long: ATP-dependent RNA helicase RhlB (432 aa).

A Q motif motif is present at residues 9–37; sequence KKFSDFALHPKVIEALEKKGFSNCTQIQA. The Helicase ATP-binding domain maps to 40 to 219; the sequence is LPITVKGHDI…FEQMNNPEYV (180 aa). 53–60 contributes to the ATP binding site; sequence AQTGTGKT. A DEAD box motif is present at residues 165–168; it reads DEAD. Residues 245-390 enclose the Helicase C-terminal domain; the sequence is RLLQTLIEEE…VSKYNSDALL (146 aa). The disordered stretch occupies residues 393-432; it reads LPEPKRRHRPRQGQPRRNNSAPRRGNNTQRNNRNKRPSHS. Low complexity predominate over residues 404-423; it reads QGQPRRNNSAPRRGNNTQRN.

Belongs to the DEAD box helicase family. RhlB subfamily. As to quaternary structure, component of the RNA degradosome, which is a multiprotein complex involved in RNA processing and mRNA degradation.

It localises to the cytoplasm. It catalyses the reaction ATP + H2O = ADP + phosphate + H(+). Functionally, DEAD-box RNA helicase involved in RNA degradation. Has RNA-dependent ATPase activity and unwinds double-stranded RNA. In Proteus mirabilis (strain HI4320), this protein is ATP-dependent RNA helicase RhlB.